Reading from the N-terminus, the 145-residue chain is UPF0735 ACT domain-containing protein CLD_1535 (145 aa).

An ACT domain is found at 69–144 (TIGLLLGHER…NVIKVDLIAM (76 aa)).

Belongs to the UPF0735 family.

This is UPF0735 ACT domain-containing protein CLD_1535 from Clostridium botulinum (strain Okra / Type B1).